The sequence spans 163 residues: MASEHSFDISGEIDKQELKNALEQAKKELDSRYDLKGIKSEIELNEKESVYKLICSSEAKLEVLKDIVISKLIKRGINPAGIKELNRESGANFRLNLKVNDAIDTDSAKKINKAIKDSKLKVTSSIRGNEIRVVGKQIDDLQSVMKIVKELNLELNLSFKNLK.

It belongs to the YajQ family.

Functionally, nucleotide-binding protein. This chain is Nucleotide-binding protein Cla_1551, found in Campylobacter lari (strain RM2100 / D67 / ATCC BAA-1060).